We begin with the raw amino-acid sequence, 432 residues long: Adenylosuccinate synthetase (432 aa).

GTP contacts are provided by residues 12 to 18 (GDEGKGK) and 40 to 42 (GHT). Aspartate 13 functions as the Proton acceptor in the catalytic mechanism. Aspartate 13 and glycine 40 together coordinate Mg(2+). IMP contacts are provided by residues 13–16 (DEGK), 38–41 (NAGH), threonine 130, arginine 144, glutamine 225, threonine 240, and arginine 304. Histidine 41 serves as the catalytic Proton donor. 300-306 (STTGRPR) contributes to the substrate binding site. Residues arginine 306, 332 to 334 (KLD), and 414 to 416 (SVG) contribute to the GTP site.

It belongs to the adenylosuccinate synthetase family. In terms of assembly, homodimer. Mg(2+) serves as cofactor.

Its subcellular location is the cytoplasm. The enzyme catalyses IMP + L-aspartate + GTP = N(6)-(1,2-dicarboxyethyl)-AMP + GDP + phosphate + 2 H(+). The protein operates within purine metabolism; AMP biosynthesis via de novo pathway; AMP from IMP: step 1/2. Functionally, plays an important role in the de novo pathway of purine nucleotide biosynthesis. Catalyzes the first committed step in the biosynthesis of AMP from IMP. This is Adenylosuccinate synthetase from Citrifermentans bemidjiense (strain ATCC BAA-1014 / DSM 16622 / JCM 12645 / Bem) (Geobacter bemidjiensis).